A 1189-amino-acid polypeptide reads, in one-letter code: Pesticidal crystal protein Cry1Ca (1189 aa).

This sequence belongs to the delta endotoxin family.

In terms of biological role, promotes colloidosmotic lysis by binding to the midgut epithelial cells of many lepidopteran larvae including Spodoptera species. The polypeptide is Pesticidal crystal protein Cry1Ca (cry1Ca) (Bacillus thuringiensis subsp. aizawai).